Consider the following 579-residue polypeptide: Transcription factor MTB2 (579 aa).

The interval 373–439 is disordered; that stretch reads GGMQIDFTNS…PLNHVEAERQ (67 aa). Residues 382–392 are compositionally biased toward low complexity; that stretch reads SRPVVSPVPTV. 2 stretches are compositionally biased toward basic and acidic residues: residues 393-415 and 425-439; these read ESEH…DERR and NGRE…AERQ. The segment at 428–441 is basic motif; degenerate; it reads EEPLNHVEAERQRR. In terms of domain architecture, bHLH spans 428-477; sequence EEPLNHVEAERQRREKLNQRFYALRAVVPNISKMDKASLLGDAIAHITDM. The tract at residues 442–477 is helix-loop-helix motif; sequence EKLNQRFYALRAVVPNISKMDKASLLGDAIAHITDM.

The protein resides in the nucleus. Its function is as follows. Transcription factor that negatively regulates jasmonate (JA) signaling. Negatively regulates JA-dependent response to wounding, JA-induced expression of defense genes, JA-dependent responses against herbivorous insects, and JA-dependent resistance against Botrytis cinerea infection. Plays a positive role in resistance against the bacterial pathogen Pseudomonas syringae pv tomato DC3000. In Solanum lycopersicum (Tomato), this protein is Transcription factor MTB2.